The chain runs to 21 residues: Fibrinogen beta chain (21 aa).

Gln1 is subject to Pyrrolidone carboxylic acid. The residue at position 6 (Tyr6) is a Sulfotyrosine.

In terms of assembly, heterohexamer; disulfide linked. Contains 2 sets of 3 non-identical chains (alpha, beta and gamma). The 2 heterotrimers are in head to head conformation with the N-termini in a small central domain. Conversion of fibrinogen to fibrin is triggered by thrombin, which cleaves fibrinopeptides A and B from alpha and beta chains, and thus exposes the N-terminal polymerization sites responsible for the formation of the soft clot.

It is found in the secreted. Cleaved by the protease thrombin to yield monomers which, together with fibrinogen alpha (FGA) and fibrinogen gamma (FGG), polymerize to form an insoluble fibrin matrix. Fibrin has a major function in hemostasis as one of the primary components of blood clots. In addition, functions during the early stages of wound repair to stabilize the lesion and guide cell migration during re-epithelialization. Was originally thought to be essential for platelet aggregation, based on in vitro studies using anticoagulated blood. However subsequent studies have shown that it is not absolutely required for thrombus formation in vivo. Enhances expression of SELP in activated platelets. Maternal fibrinogen is essential for successful pregnancy. Fibrin deposition is also associated with infection, where it protects against IFNG-mediated hemorrhage. May also facilitate the antibacterial immune response via both innate and T-cell mediated pathways. In Rangifer tarandus (Reindeer), this protein is Fibrinogen beta chain (FGB).